We begin with the raw amino-acid sequence, 507 residues long: Rhamnogalacturonase A (507 aa).

A signal peptide spans 1–21 (MYVSRLLLFLAPLLVKGQLSG). C38 and C64 are oxidised to a cystine. The Proton donor role is filled by D215. A disulfide bridge connects residues C217 and C234. N235 is a glycosylation site (N-linked (GlcNAc...) asparagine). H290 is a catalytic residue. N317 carries an N-linked (GlcNAc...) asparagine glycan. 2 disulfide bridges follow: C340/C346 and C368/C377. The segment covering 462–491 (SPATSSPTATSTAISSVDPVSAATTTATSH) has biased composition (low complexity). A disordered region spans residues 462–507 (SPATSSPTATSTAISSVDPVSAATTTATSHGHGKSHHKHQCRAHRH). Positions 492 to 507 (GHGKSHHKHQCRAHRH) are enriched in basic residues.

It belongs to the glycosyl hydrolase 28 family.

It is found in the secreted. It carries out the reaction Endohydrolysis of alpha-D-GalA-(1-&gt;2)-alpha-L-Rha glycosidic bond in the rhamnogalacturonan I backbone with initial inversion of anomeric configuration releasing oligosaccharides with beta-D-GalA at the reducing end.. Pectinolytic enzymes consist of four classes of enzymes: pectine lyase, polygalacturonase, pectin methylesterase and rhamnogalacturonase. Hydrolyzes alpha-D-galacturonopyranosyl-(1,2)-alpha-L-rhamnopyranosyl linkages in the backbone of the hairy regions of pectins. Active against linseed rhamnogalacturonan. The protein is Rhamnogalacturonase A (rhgA) of Emericella nidulans (strain FGSC A4 / ATCC 38163 / CBS 112.46 / NRRL 194 / M139) (Aspergillus nidulans).